The following is a 784-amino-acid chain: Protein Skeletor, isoforms B/C (784 aa).

Residues 1–28 (MLAMKDKPWLLLFGLLAALSCLASFGDA) form the signal peptide. 2 consecutive DM13 domains span residues 34-143 (GTKI…VSIP) and 151-258 (PQKI…VRLP). The DOMON domain maps to 287 to 419 (LAFEVRWAVA…GAESVVWAIG (133 aa)). Positions 451 to 491 (PLPEGARGNSNSSEQEDSAPAAQSSTGGAGYPPAGRPNVEP) are disordered.

In terms of assembly, interacts with Chro and Mgtor as part of a macromolecular complex forming the spindle matrix. Chro colocalizes with Skeletor (Skel) on the chromosomes at interphase and on spindle during metaphase.

It is found in the cytoplasm. The protein localises to the cytoskeleton. It localises to the spindle. The protein resides in the nucleus. Its subcellular location is the nucleolus. It is found in the chromosome. Provides structural support to stabilize and organize the microtubule spindle during mitosis (within embryonic somatic cells) and meiosis (within spermatocytes). The role in mitosis regulation depends on the Ran pathway. This Drosophila melanogaster (Fruit fly) protein is Protein Skeletor, isoforms B/C.